A 175-amino-acid chain; its full sequence is Small ribosomal subunit protein uS5 (175 aa).

An S5 DRBM domain is found at 11-74; the sequence is LSEVLVDVNR…QAAKKRMMKV (64 aa).

It belongs to the universal ribosomal protein uS5 family. Part of the 30S ribosomal subunit. Contacts proteins S4 and S8.

In terms of biological role, with S4 and S12 plays an important role in translational accuracy. Functionally, located at the back of the 30S subunit body where it stabilizes the conformation of the head with respect to the body. The protein is Small ribosomal subunit protein uS5 of Rickettsia prowazekii (strain Madrid E).